The sequence spans 124 residues: uncharacterized protein (124 aa).

This is an uncharacterized protein from Bacillus subtilis (strain 168).